The following is a 131-amino-acid chain: MFITDPISDMIVRIKNANQRKFKTVLIPYSNKKAKILEILLNEGYISSFVTKGEGKDKTLEVALKYKGNQSAIIDFKRISKPGLRVYAAANNLSSVLSGYGTVIISTSKGVMTEKQARKENVGGEVLAYIW.

The protein belongs to the universal ribosomal protein uS8 family. In terms of assembly, part of the 30S ribosomal subunit. Contacts proteins S5 and S12.

One of the primary rRNA binding proteins, it binds directly to 16S rRNA central domain where it helps coordinate assembly of the platform of the 30S subunit. This Mycoplasmopsis agalactiae (strain NCTC 10123 / CIP 59.7 / PG2) (Mycoplasma agalactiae) protein is Small ribosomal subunit protein uS8.